Consider the following 930-residue polypeptide: Isoleucine--tRNA ligase (930 aa).

Positions 1-21 (MRVKDTLNLGKTKFPMRGRLP) are disordered. The short motif at 57–67 (PYANGPIHIGH) is the 'HIGH' region element. Glutamate 555 lines the L-isoleucyl-5'-AMP pocket. The 'KMSKS' region motif lies at 596 to 600 (KMSKS). An ATP-binding site is contributed by lysine 599. Zn(2+) contacts are provided by cysteine 889, cysteine 892, cysteine 909, and cysteine 912.

The protein belongs to the class-I aminoacyl-tRNA synthetase family. IleS type 1 subfamily. As to quaternary structure, monomer. Requires Zn(2+) as cofactor.

It localises to the cytoplasm. The enzyme catalyses tRNA(Ile) + L-isoleucine + ATP = L-isoleucyl-tRNA(Ile) + AMP + diphosphate. Its function is as follows. Catalyzes the attachment of isoleucine to tRNA(Ile). As IleRS can inadvertently accommodate and process structurally similar amino acids such as valine, to avoid such errors it has two additional distinct tRNA(Ile)-dependent editing activities. One activity is designated as 'pretransfer' editing and involves the hydrolysis of activated Val-AMP. The other activity is designated 'posttransfer' editing and involves deacylation of mischarged Val-tRNA(Ile). In Limosilactobacillus fermentum (strain NBRC 3956 / LMG 18251) (Lactobacillus fermentum), this protein is Isoleucine--tRNA ligase.